A 209-amino-acid polypeptide reads, in one-letter code: Uracil phosphoribosyltransferase (209 aa).

Residues Arg79, Arg104, and 131-139 (DPMLATGGS) contribute to the 5-phospho-alpha-D-ribose 1-diphosphate site. Residues Ile194 and 199-201 (GDA) contribute to the uracil site. Asp200 is a binding site for 5-phospho-alpha-D-ribose 1-diphosphate.

The protein belongs to the UPRTase family. It depends on Mg(2+) as a cofactor.

It carries out the reaction UMP + diphosphate = 5-phospho-alpha-D-ribose 1-diphosphate + uracil. Its pathway is pyrimidine metabolism; UMP biosynthesis via salvage pathway; UMP from uracil: step 1/1. With respect to regulation, allosterically activated by GTP. In terms of biological role, catalyzes the conversion of uracil and 5-phospho-alpha-D-ribose 1-diphosphate (PRPP) to UMP and diphosphate. The protein is Uracil phosphoribosyltransferase of Francisella tularensis subsp. novicida (strain U112).